We begin with the raw amino-acid sequence, 106 residues long: Large ribosomal subunit protein uL24 (106 aa).

This sequence belongs to the universal ribosomal protein uL24 family. As to quaternary structure, part of the 50S ribosomal subunit.

Functionally, one of two assembly initiator proteins, it binds directly to the 5'-end of the 23S rRNA, where it nucleates assembly of the 50S subunit. In terms of biological role, one of the proteins that surrounds the polypeptide exit tunnel on the outside of the subunit. This Thermosipho melanesiensis (strain DSM 12029 / CIP 104789 / BI429) protein is Large ribosomal subunit protein uL24.